Here is a 504-residue protein sequence, read N- to C-terminus: Argininosuccinate lyase 2 (504 aa).

The protein belongs to the lyase 1 family. Argininosuccinate lyase subfamily.

It localises to the cytoplasm. It carries out the reaction 2-(N(omega)-L-arginino)succinate = fumarate + L-arginine. It functions in the pathway amino-acid biosynthesis; L-arginine biosynthesis; L-arginine from L-ornithine and carbamoyl phosphate: step 3/3. In Agrobacterium fabrum (strain C58 / ATCC 33970) (Agrobacterium tumefaciens (strain C58)), this protein is Argininosuccinate lyase 2.